Consider the following 132-residue polypeptide: uncharacterized protein (132 aa).

A disordered region spans residues 113-132; the sequence is LDPQSPLHSPPLSTSPDSRR.

This is an uncharacterized protein from Saccharomyces cerevisiae (strain ATCC 204508 / S288c) (Baker's yeast).